The primary structure comprises 583 residues: CD166 antigen (583 aa).

The N-terminal stretch at 1–27 is a signal peptide; the sequence is MESKGASSCRLLFCLLISATVFRPGLG. Ig-like V-type domains lie at 28–120 and 125–234; these read WYTV…TEDN and PTIV…KTIH. The Extracellular segment spans residues 28–527; that stretch reads WYTVNSAYGD…NREKVNDQAK (500 aa). 2 cysteine pairs are disulfide-bonded: Cys-43-Cys-113 and Cys-157-Cys-220. 9 N-linked (GlcNAc...) asparagine glycosylation sites follow: Asn-91, Asn-95, Asn-167, Asn-265, Asn-306, Asn-361, Asn-457, Asn-480, and Asn-499. 3 Ig-like C2-type domains span residues 245–328, 333–409, and 416–501; these read PTEQ…TAIT, DLSL…ESLT, and PQIK…LNVS. 3 disulfide bridges follow: Cys-270/Cys-313, Cys-354/Cys-392, and Cys-435/Cys-485. The chain crosses the membrane as a helical span at residues 528-549; that stretch reads LIVGIVVGLLLAALVAGVVYWL. The Cytoplasmic segment spans residues 550-583; sequence YMKKSKTASKHVNKDLGNMEENKKLEENNHKTEA. Residues 562-583 form a disordered region; sequence NKDLGNMEENKKLEENNHKTEA. Positions 569-583 are enriched in basic and acidic residues; that stretch reads EENKKLEENNHKTEA.

As to quaternary structure, homodimer. Interacts (via extracellular domain) with CD6 (via extracellular domain). Homodimerization and interaction with CD6 involve the same region and cannot occur simultaneously. The affinity for CD6 is much higher than the affinity for self-association. Interacts (via glycosylated extracellular domain) with LGALS1 and LGALS3. Interaction with LGALS1 or LGALS3 inhibits interaction with CD6. Post-translationally, glycosylated. Detected on hematopoietic stem cells derived from umbilical cord blood. Detected on lymph vessel endothelial cells, skin and tonsil. Detected on peripheral blood monocytes. Detected on monocyte-derived dendritic cells (at protein level). Detected at low levels in spleen, placenta, liver. Expressed by activated T-cells, B-cells, monocytes and thymic epithelial cells. Isoform 1 and isoform 3 are detected in vein and artery endothelial cells, astrocytes, keratinocytes and artery smooth muscle cells. Expressed by neurons in the brain. Restricted expression in tumor cell lines. Detected in highly metastasizing melanoma cell lines.

It is found in the cell membrane. Its subcellular location is the cell projection. It localises to the axon. The protein localises to the dendrite. The protein resides in the secreted. Cell adhesion molecule that mediates both heterotypic cell-cell contacts via its interaction with CD6, as well as homotypic cell-cell contacts. Promotes T-cell activation and proliferation via its interactions with CD6. Contributes to the formation and maturation of the immunological synapse via its interactions with CD6. Mediates homotypic interactions with cells that express ALCAM. Acts as a ligand for the LILRB4 receptor, enhancing LILRB4-mediated inhibition of T cell proliferation. Required for normal hematopoietic stem cell engraftment in the bone marrow. Mediates attachment of dendritic cells onto endothelial cells via homotypic interaction. Inhibits endothelial cell migration and promotes endothelial tube formation via homotypic interactions. Required for normal organization of the lymph vessel network. Required for normal hematopoietic stem cell engraftment in the bone marrow. Plays a role in hematopoiesis; required for normal numbers of hematopoietic stem cells in bone marrow. Promotes in vitro osteoblast proliferation and differentiation. Promotes neurite extension, axon growth and axon guidance; axons grow preferentially on surfaces that contain ALCAM. Mediates outgrowth and pathfinding for retinal ganglion cell axons. Its function is as follows. Inhibits activities of membrane-bound isoforms by competing for the same interaction partners. Inhibits cell attachment via homotypic interactions. Promotes endothelial cell migration. Inhibits endothelial cell tube formation. This Homo sapiens (Human) protein is CD166 antigen (ALCAM).